The sequence spans 304 residues: Homoserine kinase (304 aa).

90 to 100 (PLARGLGSSAS) lines the ATP pocket.

Belongs to the GHMP kinase family. Homoserine kinase subfamily.

The protein localises to the cytoplasm. The enzyme catalyses L-homoserine + ATP = O-phospho-L-homoserine + ADP + H(+). It functions in the pathway amino-acid biosynthesis; L-threonine biosynthesis; L-threonine from L-aspartate: step 4/5. Functionally, catalyzes the ATP-dependent phosphorylation of L-homoserine to L-homoserine phosphate. This chain is Homoserine kinase, found in Staphylococcus aureus (strain MRSA252).